Consider the following 237-residue polypeptide: MKKITLALSAVCLLFTLNHSANALVSSPSTLNPGTNVAKLAEQAPVHWVSVAQIENSLTGRPPMAVGFDIDDTVLFSSPGFWRGKKTYSPNSDDYLKNPAFWEKMNNGWDEFSIPKEVARQLIDMHVRRGDSIYFVTGRSQTKTETVTNTLADNFHIPAANMNPVIFAGDKPGQNTKIQWLQEKNIRIFYGDSDNDITAARDCGIRGIRILRAANSTYKPLPQAGAFGEEVIVNSEY.

The N-terminal stretch at 1-23 (MKKITLALSAVCLLFTLNHSANA) is a signal peptide. Asp-69 acts as the Nucleophile in catalysis. Residues Asp-69 and Asp-71 each coordinate Mg(2+). Catalysis depends on Asp-71, which acts as the Proton donor. Substrate-binding positions include 137-138 (TG) and Lys-177. Asp-192 is a Mg(2+) binding site.

The protein belongs to the class B bacterial acid phosphatase family. As to quaternary structure, homotetramer. Requires Mg(2+) as cofactor.

The protein resides in the periplasm. It catalyses the reaction a phosphate monoester + H2O = an alcohol + phosphate. Functionally, dephosphorylates several organic phosphate monoesters. Also has a phosphotransferase activity catalyzing the transfer of low-energy phosphate groups from organic phosphate monoesters to free hydroxyl groups of various organic compounds. The sequence is that of Class B acid phosphatase from Salmonella arizonae (strain ATCC BAA-731 / CDC346-86 / RSK2980).